The primary structure comprises 286 residues: MAAPNDPELTRRRQRQEDFLRGTSKINFDDHVDHHVLSGKTAIITGGASGLGLGIAKALSDNGCRVAVLDLSECAEAGTDESNIESPKLFKCDVSSWESLLAAFQEVMLWSADRLDIVVLSAGVRSHNIKDLILKRAVGSASTPVKPPSSVFDVNLLGTYYSAYLALWYFTNLESKSDGLESSSWRPQLLFIGSLASYIEQPLSADYCASKHGVRGLWKSVRSHSASFGGCQTNLLAPTFIDNRQGSTKSRGDGALISLTTDVKLGEVADVVAGALRCICDNNIEG.

Positions 49, 51, 93, 207, 211, 241, and 245 each coordinate NADP(+). The Proton acceptor role is filled by Tyr-207. The active-site Proton donor is Tyr-207. Residue Lys-211 is the Lowers pKa of active site Tyr of the active site.

The protein belongs to the short-chain dehydrogenases/reductases (SDR) family. Homodimer.

Its subcellular location is the cytoplasm. It localises to the cytosol. It functions in the pathway secondary metabolite biosynthesis. NADP-dependent dehydrogenase; part of the gene cluster that mediates the biosynthesis of squalestatin S1 (SQS1, also known as zaragozic acid A), a heavily oxidized fungal polyketide that offers potent cholesterol lowering activity by targeting squalene synthase (SS). SQS1 is composed of a 2,8-dioxobicyclic[3.2.1]octane-3,4,5-tricarboxyclic acid core that is connected to two lipophilic polyketide arms. These initial steps feature the priming of an unusual benzoic acid starter unit onto the highly reducing polyketide synthase clz14, followed by oxaloacetate extension and product release to generate a tricarboxylic acid containing product. The phenylalanine ammonia lyase (PAL) clz10 and the acyl-CoA ligase clz12 are involved in transforming phenylalanine into benzoyl-CoA. The citrate synthase-like protein clz17 is involved in connecting the C-alpha-carbons of the hexaketide chain and oxaloacetate to afford the tricarboxylic acid unit. The potential hydrolytic enzymes, clz11 and clz13, are in close proximity to pks2 and may participate in product release. On the other side, the tetraketide arm is synthesized by a the squalestatin tetraketide synthase clz2 and enzymatically esterified to the core in the last biosynthetic step, by the acetyltransferase clz6. The biosynthesis of the tetraketide must involve 3 rounds of chain extension. After the first and second rounds methyl-transfer occurs, and in all rounds of extension the ketoreductase and dehydratase are active. The enoyl reductase and C-MeT of clz2 are not active in the final round of extension. The acetyltransferase clz6 appears to have a broad substrate selectivity for its acyl CoA substrate, allowing the in vitro synthesis of novel squalestatins. The biosynthesis of SQS1 requires several oxidative steps likely performed by oxidoreductases clz3, clz15 and clz16. Finally, in support of the identification of the cluster as being responsible for SQS1 production, the cluster contains a gene encoding a putative squalene synthase (SS) clz20, suggesting a likely mechanism for self-resistance. The protein is NADP-dependent dehydrogenase clz5 of Cochliobolus lunatus (Filamentous fungus).